The following is a 113-amino-acid chain: Mitochondrial import inner membrane translocase subunit tim16 (113 aa).

Residues 56–108 (KILGLENVETVSKEDIDKKYNELLTINDPKDGGSEYLQIKISGAKHCLHSALK) are J-like.

This sequence belongs to the TIM16/PAM16 family. As to quaternary structure, probable component of the PAM complex at least composed of a mitochondrial HSP70 protein, grepE, tim16 and tim14. Associates with the TIM23 complex.

Its subcellular location is the mitochondrion inner membrane. Functionally, regulates ATP-dependent protein translocation into the mitochondrial matrix. This Dictyostelium discoideum (Social amoeba) protein is Mitochondrial import inner membrane translocase subunit tim16 (timm16).